The primary structure comprises 589 residues: Protein kinase G11A (589 aa).

The tract at residues 1-167 is disordered; it reads MASKAMPRAP…SACSSISSVT (167 aa). Polar residues-rich tracts occupy residues 15–36, 46–55, and 63–76; these read NLQS…SPSK, AESSKPNSEV, and TQHQ…TGSN. The segment covering 91 to 100 has biased composition (basic and acidic residues); that stretch reads RLADEEKGVV. Residues 142 to 165 are compositionally biased toward low complexity; that stretch reads SSSRCRPSTSSDVSDESACSSISS. In terms of domain architecture, Protein kinase spans 195–533; the sequence is FKLLKKLGCG…ATEIKQHPFF (339 aa). ATP-binding positions include 201–209 and lysine 224; that span reads LGCGDIGSV. The active-site Proton acceptor is aspartate 320. The interval 551–589 is disordered; it reads RPVEIERPPKQPVSTSEPAAAPSDAAQKSSDSYLEFDFF.

Belongs to the protein kinase superfamily. Ser/Thr protein kinase family.

It carries out the reaction L-seryl-[protein] + ATP = O-phospho-L-seryl-[protein] + ADP + H(+). The enzyme catalyses L-threonyl-[protein] + ATP = O-phospho-L-threonyl-[protein] + ADP + H(+). In terms of biological role, may play a role in the regulation of metabolism and signal transduction processes. This is Protein kinase G11A from Oryza sativa subsp. indica (Rice).